The sequence spans 157 residues: MMDVLMYLFETYIHSDVELNVEQEKLEDELLKAGFHQEAVYKALDWLEDLARLQDTDEHARVATGTSTSMRIYTQQEIDGINTVCRGFLLFLEQIKVLTSETREMVIEQVMALETDELSLDDLKWVVLMVLFNVPGQESAYTQMEELLYTSDVGLTH.

Belongs to the Smg family.

The chain is Protein Smg homolog from Aliivibrio fischeri (strain ATCC 700601 / ES114) (Vibrio fischeri).